The chain runs to 122 residues: Large ribosomal subunit protein uL14 (122 aa).

This sequence belongs to the universal ribosomal protein uL14 family. Part of the 50S ribosomal subunit. Forms a cluster with proteins L3 and L19. In the 70S ribosome, L14 and L19 interact and together make contacts with the 16S rRNA in bridges B5 and B8.

Its function is as follows. Binds to 23S rRNA. Forms part of two intersubunit bridges in the 70S ribosome. The chain is Large ribosomal subunit protein uL14 from Caldanaerobacter subterraneus subsp. tengcongensis (strain DSM 15242 / JCM 11007 / NBRC 100824 / MB4) (Thermoanaerobacter tengcongensis).